Consider the following 66-residue polypeptide: Large ribosomal subunit protein bL35 (66 aa).

It belongs to the bacterial ribosomal protein bL35 family.

This Borreliella afzelii (strain PKo) (Borrelia afzelii) protein is Large ribosomal subunit protein bL35.